We begin with the raw amino-acid sequence, 395 residues long: Phosphopentomutase (395 aa).

6 residues coordinate Mn(2+): Asp13, Asp288, His293, Asp329, His330, and His341.

It belongs to the phosphopentomutase family. Requires Mn(2+) as cofactor.

It localises to the cytoplasm. It catalyses the reaction 2-deoxy-alpha-D-ribose 1-phosphate = 2-deoxy-D-ribose 5-phosphate. The catalysed reaction is alpha-D-ribose 1-phosphate = D-ribose 5-phosphate. It participates in carbohydrate degradation; 2-deoxy-D-ribose 1-phosphate degradation; D-glyceraldehyde 3-phosphate and acetaldehyde from 2-deoxy-alpha-D-ribose 1-phosphate: step 1/2. In terms of biological role, isomerase that catalyzes the conversion of deoxy-ribose 1-phosphate (dRib-1-P) and ribose 1-phosphate (Rib-1-P) to deoxy-ribose 5-phosphate (dRib-5-P) and ribose 5-phosphate (Rib-5-P), respectively. The chain is Phosphopentomutase from Agathobacter rectalis (strain ATCC 33656 / DSM 3377 / JCM 17463 / KCTC 5835 / VPI 0990) (Eubacterium rectale).